The chain runs to 313 residues: Porphobilinogen deaminase (313 aa).

C241 carries the post-translational modification S-(dipyrrolylmethanemethyl)cysteine.

Belongs to the HMBS family. Monomer. It depends on dipyrromethane as a cofactor.

It catalyses the reaction 4 porphobilinogen + H2O = hydroxymethylbilane + 4 NH4(+). It participates in porphyrin-containing compound metabolism; protoporphyrin-IX biosynthesis; coproporphyrinogen-III from 5-aminolevulinate: step 2/4. Its pathway is porphyrin-containing compound metabolism; chlorophyll biosynthesis. In terms of biological role, tetrapolymerization of the monopyrrole PBG into the hydroxymethylbilane pre-uroporphyrinogen in several discrete steps. The chain is Porphobilinogen deaminase from Chlorobium phaeovibrioides (strain DSM 265 / 1930) (Prosthecochloris vibrioformis (strain DSM 265)).